Here is a 116-residue protein sequence, read N- to C-terminus: Large ribosomal subunit protein bL20 (116 aa).

It belongs to the bacterial ribosomal protein bL20 family.

Functionally, binds directly to 23S ribosomal RNA and is necessary for the in vitro assembly process of the 50S ribosomal subunit. It is not involved in the protein synthesizing functions of that subunit. The chain is Large ribosomal subunit protein bL20 from Acaryochloris marina (strain MBIC 11017).